The primary structure comprises 196 residues: dCTP deaminase (196 aa).

Residues 113–118, aspartate 131, 139–141, tyrosine 174, lysine 181, and glutamine 185 contribute to the dCTP site; these read RSSLAR and VLE. Glutamate 141 functions as the Proton donor/acceptor in the catalytic mechanism.

It belongs to the dCTP deaminase family. Homotrimer.

It catalyses the reaction dCTP + H2O + H(+) = dUTP + NH4(+). The protein operates within pyrimidine metabolism; dUMP biosynthesis; dUMP from dCTP (dUTP route): step 1/2. Its function is as follows. Catalyzes the deamination of dCTP to dUTP. This chain is dCTP deaminase, found in Wigglesworthia glossinidia brevipalpis.